The primary structure comprises 572 residues: FAD-linked oxidoreductase patO (572 aa).

The N-terminal stretch at 1–23 (MRLSIYSSILLLRAMCLVRPTFG) is a signal peptide. Residues Asn-48, Asn-71, Asn-126, Asn-180, Asn-309, Asn-354, Asn-381, Asn-422, Asn-446, and Asn-481 are each glycosylated (N-linked (GlcNAc...) asparagine). Positions 115–295 (CAPGDMVVYS…YSMTVKAFPD (181 aa)) constitute an FAD-binding PCMH-type domain.

The protein belongs to the oxygen-dependent FAD-linked oxidoreductase family. Requires FAD as cofactor.

The protein localises to the vacuole lumen. Its pathway is mycotoxin biosynthesis; patulin biosynthesis. Functionally, FAD-linked oxidoreductase; part of the gene cluster that mediates the biosynthesis of patulin, an acetate-derived tetraketide mycotoxin produced by several fungal species that shows antimicrobial properties against several bacteria. PatO acts with patJ in the vacuole to convert gentisyl alcohol to isoepoxydon. The pathway begins with the synthesis of 6-methylsalicylic acid by the polyketide synthase (PKS) patK via condensation of acetate and malonate units. The 6-methylsalicylic acid decarboxylase patG then catalyzes the decarboxylation of 6-methylsalicylic acid to yield m-cresol (also known as 3-methylphenol). These first reactions occur in the cytosol. The intermediate m-cresol is then transported into the endoplasmic reticulum where the cytochrome P450 monooxygenase patH converts it to m-hydroxybenzyl alcohol, which is further converted to gentisyl alcohol by the cytochrome P450 monooxygenase patI. The oxidoreductases patJ and patO further convert gentisyl alcohol to isoepoxydon in the vacuole. PatN catalyzes then the transformation of isoepoxydon into phyllostine. The cluster protein patF is responsible for the conversion from phyllostine to neopatulin whereas the alcohol dehydrogenase patD converts neopatulin to E-ascladiol. The steps between isoepoxydon and E-ascladiol occur in the cytosol, and E-ascladiol is probably secreted to the extracellular space by one of the cluster-specific transporters patC or patM. Finally, the secreted patulin synthase patE catalyzes the conversion of E-ascladiol to patulin. In Aspergillus clavatus (strain ATCC 1007 / CBS 513.65 / DSM 816 / NCTC 3887 / NRRL 1 / QM 1276 / 107), this protein is FAD-linked oxidoreductase patO.